A 174-amino-acid chain; its full sequence is Alpha-crystallin B chain (174 aa).

Residue M1 is modified to N-acetylmethionine. The region spanning 55 to 163 (RMPSWLETGL…PERSIPITRE (109 aa)) is the sHSP domain. Zn(2+) contacts are provided by H82, H103, E105, and H110. The interval 148–174 (RKQSDVPERSIPITREEKPAIAGAQRK) is disordered. Positions 149 to 166 (KQSDVPERSIPITREEKP) are enriched in basic and acidic residues.

This sequence belongs to the small heat shock protein (HSP20) family. As to quaternary structure, heteromer composed of three CRYAA and one CRYAB subunits. Aggregates with homologous proteins, including the small heat shock protein HSPB1, to form large heteromeric complexes. Inter-subunit bridging via zinc ions enhances stability, which is crucial as there is no protein turn over in the lens. Lens as well as other tissues.

Its function is as follows. May contribute to the transparency and refractive index of the lens. This is Alpha-crystallin B chain (CRYAB) from Anas platyrhynchos (Mallard).